The sequence spans 140 residues: MSEEQTTQVNIKKKEKWGVAHIYSSYNNTIIHITDLTGAETISRWSGGMVVKADRDEPSPYAAMIAARRAAEEAMEKGITGVHIKVRAPGGSKSKSPGPGAQAAIRALSRAGLRIGRVEDVTPIPHDGTRPKGGRRGRRV.

The disordered stretch occupies residues 116 to 140 (GRVEDVTPIPHDGTRPKGGRRGRRV).

The protein belongs to the universal ribosomal protein uS11 family. In terms of assembly, part of the 30S ribosomal subunit.

Functionally, located on the platform of the 30S subunit. The protein is Small ribosomal subunit protein uS11 of Thermococcus kodakarensis (strain ATCC BAA-918 / JCM 12380 / KOD1) (Pyrococcus kodakaraensis (strain KOD1)).